Consider the following 309-residue polypeptide: MNQPLQHITVLLDEAVDALLDGAAQPVAGQWVDATFGRGGHSRRILQRLGPDGALLAFDKDPDAIEEAARITDARFSIRHEGFRHLSELPAGSVQGVLMDLGVSSPQIDNPERGFSFRFEGPLDMRMDTTRGQSVADWLAEADAQQIAEVIRDYGEERFAGPIAKAIVARRESQGPLRNTAELAELVAGAVRTREAGQNPATRTFQALRIFINAELEELEQALEASLRVLAPGGRLVVISFHSLEDRIVKQFIAKHSKEVYDRRAPFAVPTPMRLEALGRIKPSEAEVAANARSRSAVMRVARRTGVPA.

S-adenosyl-L-methionine-binding positions include 39 to 41, Asp-59, Phe-83, Asp-100, and Gln-107; that span reads GGH.

Belongs to the methyltransferase superfamily. RsmH family.

The protein localises to the cytoplasm. It carries out the reaction cytidine(1402) in 16S rRNA + S-adenosyl-L-methionine = N(4)-methylcytidine(1402) in 16S rRNA + S-adenosyl-L-homocysteine + H(+). Its function is as follows. Specifically methylates the N4 position of cytidine in position 1402 (C1402) of 16S rRNA. The sequence is that of Ribosomal RNA small subunit methyltransferase H from Delftia acidovorans (strain DSM 14801 / SPH-1).